A 360-amino-acid chain; its full sequence is Histidinol-phosphate aminotransferase (360 aa).

An N6-(pyridoxal phosphate)lysine modification is found at Lys-223.

It belongs to the class-II pyridoxal-phosphate-dependent aminotransferase family. Histidinol-phosphate aminotransferase subfamily. Homodimer. Pyridoxal 5'-phosphate serves as cofactor.

It carries out the reaction L-histidinol phosphate + 2-oxoglutarate = 3-(imidazol-4-yl)-2-oxopropyl phosphate + L-glutamate. It participates in amino-acid biosynthesis; L-histidine biosynthesis; L-histidine from 5-phospho-alpha-D-ribose 1-diphosphate: step 7/9. The protein is Histidinol-phosphate aminotransferase of Bacillus subtilis subsp. natto.